We begin with the raw amino-acid sequence, 192 residues long: Fibroblast growth factor 4B (192 aa).

The N-terminal stretch at 1 to 22 (MTVQLALVPILLLGTAAVMVHC) is a signal peptide.

Belongs to the heparin-binding growth factors family.

Its subcellular location is the secreted. Functionally, plays an important role in the regulation of embryonic development, cell proliferation, and cell differentiation. Good candidate for an inducing factor with possible roles both in mesoderm induction at the blastula stage and in the formation of the anteroposterior axis at the gastrula stage. The chain is Fibroblast growth factor 4B (fgf4-b) from Xenopus laevis (African clawed frog).